We begin with the raw amino-acid sequence, 210 residues long: Cell division protein SepF (210 aa).

2 stretches are compositionally biased toward low complexity: residues 36–47 (QQQQTPAAVPTQ) and 59–69 (RASATTATTAS). Disordered stretches follow at residues 36-69 (QQQQ…TTAS) and 182-210 (NEMS…QMIQ).

The protein belongs to the SepF family. As to quaternary structure, homodimer. Interacts with FtsZ.

Its subcellular location is the cytoplasm. Its function is as follows. Cell division protein that is part of the divisome complex and is recruited early to the Z-ring. Probably stimulates Z-ring formation, perhaps through the cross-linking of FtsZ protofilaments. Its function overlaps with FtsA. In Trichodesmium erythraeum (strain IMS101), this protein is Cell division protein SepF.